The primary structure comprises 804 residues: Endoplasmin (804 aa).

Residues 1 to 21 (MRALWVLGLCCVLLTFGSVRA) form the signal peptide. The short motif at 42–44 (SRT) is the SRT pseudosubstrate motif element. A glycan (N-linked (GlcNAc...) asparagine) is linked at Asn-62. Ser-64 carries the phosphoserine modification. A glycan (N-linked (GlcNAc...) asparagine) is linked at Asn-107. Asn-107, Asp-149, and Asn-162 together coordinate ATP. An N6-(2-hydroxyisobutyryl)lysine modification is found at Lys-168. Ser-172 carries the phosphoserine modification. Phe-199 lines the ATP pocket. Asn-217 is a glycosylation site (N-linked (GlcNAc...) asparagine). The tract at residues 288-323 (TVEEPMEEEEAAKEEKEESDDEAAVEEEEEEKKPKT) is disordered. Positions 289–317 (VEEPMEEEEAAKEEKEESDDEAAVEEEEE) are enriched in acidic residues. Ser-306 and Ser-403 each carry phosphoserine. The residue at position 404 (Lys-404) is an N6-succinyllysine. Asn-445 is a glycosylation site (N-linked (GlcNAc...) asparagine). A Phosphoserine modification is found at Ser-447. Lys-479 bears the N6-acetyllysine mark. 2 N-linked (GlcNAc...) asparagine glycosylation sites follow: Asn-481 and Asn-502. The residue at position 633 (Lys-633) is an N6-succinyllysine. Residues 750-804 (DPDAKVEEEPEEEPEETTEDTTEDTEQDDDEEMDAGADEEEQETSETSTAEKDEL) form a disordered region. Positions 757-793 (EEPEEEPEETTEDTTEDTEQDDDEEMDAGADEEEQET) are enriched in acidic residues. The Prevents secretion from ER motif lies at 801–804 (KDEL).

Belongs to the heat shock protein 90 family. In terms of assembly, homodimer; disulfide-linked. Component of an EIF2 complex at least composed of CELF1/CUGBP1, CALR, CALR3, EIF2S1, EIF2S2, HSP90B1 and HSPA5. Part of a large chaperone multiprotein complex comprising DNAJB11, HSP90B1, HSPA5, HYOU, PDIA2, PDIA4, PDIA6, PPIB, SDF2L1, UGGT1 and very small amounts of ERP29, but not, or at very low levels, CALR nor CANX. Interacts with AIMP1; regulates its retention in the endoplasmic reticulum. Hyperglycosylated form interacts with OS9; promoting its degradation by the endoplasmic reticulum associated degradation (ERAD). Interacts with CNPY3. This interaction is disrupted in the presence of ATP. Interacts with TLR4 and TLR9, but not with TLR3. Interacts with MZB1 in a calcium-dependent manner. Interacts with METTL23. Interacts with IL1B; the interaction facilitates cargo translocation into the ERGIC. Interacts with EIF2AK3. In terms of processing, phosphorylated by CK2. N-glycosylated cotranslationally at Asn-217 by STT3A-containing OST-A complex: this glycosylation is constitutive. In response to various stress, 5 additional facultative sites (Asn-62, Asn-107, Asn-445, Asn-481 and Asn-502) can be glycosylated post-translationally by STT3B-containing OST-B complex, leading to a hyperglycosylated form that is degraded by the ER-associated degradation (ERAD) pathway. In normal conditions, the OST-A complex together with CCDC134 prevent glycosylation at facultative sites during protein folding, thereby preventing hyperglycosylation. Mechanistically, nascent HSP90B1 is tethered during translation to a specialized CCDC134-containing translocon that forms a microenvironment for its folding, in which STT3A associates with the SRT pseudosubstrate motif, and prevents access to facultative glycosylation sites until folding is completed, rendering its facultative sites inaccessible to the OST-B complex.

The protein localises to the endoplasmic reticulum lumen. It localises to the sarcoplasmic reticulum lumen. It is found in the melanosome. It carries out the reaction ATP + H2O = ADP + phosphate + H(+). Functionally, ATP-dependent chaperone involved in the processing of proteins in the endoplasmic reticulum, regulating their transport. Together with MESD, acts as a modulator of the Wnt pathway by promoting the folding of LRP6, a coreceptor of the canonical Wnt pathway. When associated with CNPY3, required for proper folding of Toll-like receptors. Promotes folding and trafficking of TLR4 to the cell surface. May participate in the unfolding of cytosolic leaderless cargos (lacking the secretion signal sequence) such as the interleukin 1/IL-1 to facilitate their translocation into the ERGIC (endoplasmic reticulum-Golgi intermediate compartment) and secretion; the translocation process is mediated by the cargo receptor TMED10. The polypeptide is Endoplasmin (HSP90B1) (Sus scrofa (Pig)).